The following is a 216-amino-acid chain: Probable ubiquitin-conjugating enzyme E2 ECU01_1010 (216 aa).

The span at 1–10 shows a compositional bias: basic residues; that stretch reads MFKPSAHRRL. The interval 1–29 is disordered; it reads MFKPSAHRRLPREDDIIQEDDEDGPLWPS. The region spanning 29–196 is the UBC core domain; sequence SALRRLSNEE…VIRIAREEDE (168 aa). The active-site Glycyl thioester intermediate is cysteine 120.

The protein belongs to the ubiquitin-conjugating enzyme family.

The enzyme catalyses S-ubiquitinyl-[E1 ubiquitin-activating enzyme]-L-cysteine + [E2 ubiquitin-conjugating enzyme]-L-cysteine = [E1 ubiquitin-activating enzyme]-L-cysteine + S-ubiquitinyl-[E2 ubiquitin-conjugating enzyme]-L-cysteine.. It participates in protein modification; protein ubiquitination. Functionally, catalyzes the covalent attachment of ubiquitin to other proteins so as to signal them for selective protein degradation. Involved in the formation of multiubiquitin chains. The polypeptide is Probable ubiquitin-conjugating enzyme E2 ECU01_1010 (Encephalitozoon cuniculi (strain GB-M1) (Microsporidian parasite)).